The primary structure comprises 340 residues: 4-hydroxy-2-oxovalerate aldolase (340 aa).

A Pyruvate carboxyltransferase domain is found at 5-255; the sequence is IVITEVALRD…QTGVDLYKMM (251 aa). Position 13-14 (13-14) interacts with substrate; that stretch reads RD. D14 contributes to the Mn(2+) binding site. Residue H17 is the Proton acceptor of the active site. 2 residues coordinate substrate: S167 and H194. Mn(2+)-binding residues include H194 and H196. Y285 contributes to the substrate binding site.

This sequence belongs to the 4-hydroxy-2-oxovalerate aldolase family.

The catalysed reaction is (S)-4-hydroxy-2-oxopentanoate = acetaldehyde + pyruvate. This Brevibacillus brevis (strain 47 / JCM 6285 / NBRC 100599) protein is 4-hydroxy-2-oxovalerate aldolase.